Consider the following 299-residue polypeptide: DNA-binding transcriptional repressor CapW (299 aa).

The interval 1 to 84 (MESSGSSKVR…EFKPITKRSE (84 aa)) is winged HTH domain. The interval 85–196 (ATRYLNELQR…IGRLDVLEHV (112 aa)) is WYL domain. Residues 120 to 200 (SRAIEADEVA…DVLEHVFSAK (81 aa)) form the WYL domain. The tract at residues 145–189 (YQSMDAPEPQEWVLSPHALGFDGLRWHARAWCHARQVFRDFAIGR) is probable ligand-binding region. A WCX domain region spans residues 197 to 299 (FSAKPVDPLL…DRDGLQHLRR (103 aa)).

In terms of assembly, homodimer.

Transcriptional regulator of a CBASS antivirus system. CBASS (cyclic oligonucleotide-based antiphage signaling system) provides immunity against bacteriophage. The CD-NTase protein synthesizes cyclic nucleotides in response to infection; these serve as specific second messenger signals. The signals activate a diverse range of effectors, leading to bacterial cell death and thus abortive phage infection. A type III CBASS system, part of a CapW-Cap6-Cap8-Cap7-CdnC-NucC locus. Binds specifically to palindromes that overlap the -10 site in the promoter of cap6, found beween found between the genes for divergently transcribed capW and cap6 (cognate DNA). Probably represses transcription bidirectionally from the promoter. Mutations that make it a constitutive repressor in E.coli do not change DNA-binding affinity. In Stenotrophomonas maltophilia (Pseudomonas maltophilia), this protein is DNA-binding transcriptional repressor CapW.